Consider the following 261-residue polypeptide: Carnitinyl-CoA dehydratase (261 aa).

The active-site Nucleophile is E111. Residue E131 is the Proton acceptor of the active site.

This sequence belongs to the enoyl-CoA hydratase/isomerase family.

It carries out the reaction (R)-carnitinyl-CoA = crotonobetainyl-CoA + H2O. It functions in the pathway amine and polyamine metabolism; carnitine metabolism. Its function is as follows. Catalyzes the reversible dehydration of L-carnitinyl-CoA to crotonobetainyl-CoA. This is Carnitinyl-CoA dehydratase from Salmonella paratyphi C (strain RKS4594).